The primary structure comprises 313 residues: Pantoate--beta-alanine ligase (313 aa).

Residue 36-43 (MGYLHQGH) coordinates ATP. Histidine 43 functions as the Proton donor in the catalytic mechanism. Glutamine 71 lines the (R)-pantoate pocket. Glutamine 71 is a beta-alanine binding site. Position 178-181 (178-181 (GKKD)) interacts with ATP. Glutamine 184 provides a ligand contact to (R)-pantoate. 215-218 (MSSR) contacts ATP.

It belongs to the pantothenate synthetase family. In terms of assembly, homodimer.

The protein localises to the cytoplasm. It is found in the cytosol. It carries out the reaction (R)-pantoate + beta-alanine + ATP = (R)-pantothenate + AMP + diphosphate + H(+). It functions in the pathway cofactor biosynthesis; (R)-pantothenate biosynthesis; (R)-pantothenate from (R)-pantoate and beta-alanine: step 1/1. Catalyzes the condensation of pantoate with beta-alanine to form pantothenate. Essential for panthotenate biosynthesis. The polypeptide is Pantoate--beta-alanine ligase (PANC) (Oryza sativa subsp. japonica (Rice)).